A 277-amino-acid chain; its full sequence is Shikimate dehydrogenase (NADP(+)) (277 aa).

Shikimate contacts are provided by residues 18–20 (SKS) and Thr-65. The Proton acceptor role is filled by Lys-69. Glu-81 serves as a coordination point for NADP(+). Shikimate is bound by residues Asn-90 and Asp-106. Residues 130-134 (GAGGA), 154-159 (NRTFSK), and Met-217 contribute to the NADP(+) site. Tyr-219 contributes to the shikimate binding site. Gly-241 lines the NADP(+) pocket.

The protein belongs to the shikimate dehydrogenase family. In terms of assembly, homodimer.

The enzyme catalyses shikimate + NADP(+) = 3-dehydroshikimate + NADPH + H(+). It participates in metabolic intermediate biosynthesis; chorismate biosynthesis; chorismate from D-erythrose 4-phosphate and phosphoenolpyruvate: step 4/7. Involved in the biosynthesis of the chorismate, which leads to the biosynthesis of aromatic amino acids. Catalyzes the reversible NADPH linked reduction of 3-dehydroshikimate (DHSA) to yield shikimate (SA). In Vibrio parahaemolyticus serotype O3:K6 (strain RIMD 2210633), this protein is Shikimate dehydrogenase (NADP(+)).